The primary structure comprises 1323 residues: Alpha-factor-transporting ATPase (1323 aa).

Basic and acidic residues predominate over residues 1–10 (MFQEKSEKSS). Residues 1 to 23 (MFQEKSEKSSFPKRSSSLRSPSD) form a disordered region. Over residues 12–23 (PKRSSSLRSPSD) the composition is skewed to low complexity. N37 carries an N-linked (GlcNAc...) asparagine glycan. Residues 42–62 (WPLILVGILLMGGSAIATLMN) form a helical membrane-spanning segment. The region spanning 45–337 (ILVGILLMGG…ITELLAILNT (293 aa)) is the ABC transmembrane type-1 1 domain. An N-linked (GlcNAc...) asparagine glycan is attached at N83. A helical membrane pass occupies residues 93 to 113 (LCVGLIGIGCCKMILVWLGMF). N136 carries N-linked (GlcNAc...) asparagine glycosylation. A run of 4 helical transmembrane segments spans residues 169–189 (ILAS…MSFY), 192–212 (WSTT…GWYF), 281–301 (VLKT…NYLL), and 315–335 (FSSC…LAIL). One can recognise an ABC transporter 1 domain in the interval 373-609 (IYFKNVWFES…EIVQNYKSQG (237 aa)). 408 to 415 (GKSGSGKS) contacts ATP. N450 is a glycosylation site (N-linked (GlcNAc...) asparagine). Residues 677–697 (LLGFGILLAIFQGVSSPVFSY) traverse the membrane as a helical segment. Residues 678-969 (LGFGILLAIF…LIHQLPEITR (292 aa)) enclose the ABC transmembrane type-1 2 domain. A glycan (N-linked (GlcNAc...) asparagine) is linked at N714. A helical membrane pass occupies residues 724–744 (CISLSIAIFTGVTSYLSEFIL). N-linked (GlcNAc...) asparagine glycans are attached at residues N777 and N789. Helical transmembrane passes span 801 to 821 (FFPL…WSIV), 828 to 848 (LVGI…GKIL), and 909 to 929 (IGFA…LFYG). A glycan (N-linked (GlcNAc...) asparagine) is linked at N939. Residues 941–961 (SQLLQVITLLSFTISNASILI) form a helical membrane-spanning segment. N-linked (GlcNAc...) asparagine glycosylation is found at N991, N1030, and N1039. Residues 1035-1321 (ISFNNVSFSY…DGEFTKITKT (287 aa)) form the ABC transporter 2 domain. 1071-1078 (GQSGSGKS) is an ATP binding site. N1097 is a glycosylation site (N-linked (GlcNAc...) asparagine). A helical membrane pass occupies residues 1120–1140 (GLLCQTIAIVPQFPKFFSGTI). Residues N1143, N1149, and N1157 are each glycosylated (N-linked (GlcNAc...) asparagine). The chain crosses the membrane as a helical span at residues 1170–1190 (ILKLVNLHQFIVSLPQGLLTI). Residue N1192 is glycosylated (N-linked (GlcNAc...) asparagine). A compositionally biased stretch (acidic residues) spans 1194 to 1208 (SDNDNDNGNENENEN). Positions 1194 to 1217 (SDNDNDNGNENENENENGNTISTS) are disordered.

The protein belongs to the ABC transporter superfamily. Alpha-factor sex pheromone exporter (TC 3.A.1.206) family.

The protein resides in the membrane. The catalysed reaction is an [alpha-factor](in) + ATP + H2O = an [alpha-factor](out) + ADP + phosphate + H(+). The protein is Alpha-factor-transporting ATPase (HST6) of Candida albicans (strain WO-1) (Yeast).